Reading from the N-terminus, the 180-residue chain is ATP-dependent protease subunit HslV (180 aa).

Residue T6 is part of the active site. G162, C165, and T168 together coordinate Na(+).

The protein belongs to the peptidase T1B family. HslV subfamily. A double ring-shaped homohexamer of HslV is capped on each side by a ring-shaped HslU homohexamer. The assembly of the HslU/HslV complex is dependent on binding of ATP.

The protein resides in the cytoplasm. It carries out the reaction ATP-dependent cleavage of peptide bonds with broad specificity.. With respect to regulation, allosterically activated by HslU binding. Protease subunit of a proteasome-like degradation complex believed to be a general protein degrading machinery. The chain is ATP-dependent protease subunit HslV from Oleidesulfovibrio alaskensis (strain ATCC BAA-1058 / DSM 17464 / G20) (Desulfovibrio alaskensis).